A 389-amino-acid polypeptide reads, in one-letter code: STE20-related kinase adapter protein alpha (389 aa).

One can recognise a Protein kinase domain in the interval 11–321; the sequence is YELLTIIGRG…AGALLNHPFF (311 aa).

The protein belongs to the protein kinase superfamily. STE Ser/Thr protein kinase family. STE20 subfamily. In terms of assembly, component of a trimeric complex composed of STK11/LKB1, STRAD (STRADA or STRADB) and CAB39/MO25 (CAB39/MO25alpha or CAB39L/MO25beta): the complex tethers STK11/LKB1 in the cytoplasm and stimulates its catalytic activity. As to expression, expressed in brain, hypothalamus, heart and skeletal muscle.

Its subcellular location is the nucleus. It localises to the cytoplasm. In terms of biological role, pseudokinase which, in complex with CAB39/MO25 (CAB39/MO25alpha or CAB39L/MO25beta), binds to and activates STK11/LKB1. Adopts a closed conformation typical of active protein kinases and binds STK11/LKB1 as a pseudosubstrate, promoting conformational change of STK11/LKB1 in an active conformation. In Gallus gallus (Chicken), this protein is STE20-related kinase adapter protein alpha (STRADA).